The sequence spans 296 residues: Large ribosomal subunit protein uL15m (296 aa).

The transit peptide at 1-21 directs the protein to the mitochondrion; sequence MAGPLQGGGARALDLLRGLPR. The tract at residues 22 to 66 is disordered; the sequence is VSLANLKPNPGSKKPERRPRGRRRGRKCGRGHKGERQRGTRPRLG. The segment covering 36–52 has biased composition (basic residues); it reads PERRPRGRRRGRKCGRG.

Belongs to the universal ribosomal protein uL15 family. Component of the mitochondrial large ribosomal subunit (mt-LSU). Mature mammalian 55S mitochondrial ribosomes consist of a small (28S) and a large (39S) subunit. The 28S small subunit contains a 12S ribosomal RNA (12S mt-rRNA) and 30 different proteins. The 39S large subunit contains a 16S rRNA (16S mt-rRNA), a copy of mitochondrial valine transfer RNA (mt-tRNA(Val)), which plays an integral structural role, and 52 different proteins.

The protein localises to the mitochondrion. The protein is Large ribosomal subunit protein uL15m (MRPL15) of Homo sapiens (Human).